We begin with the raw amino-acid sequence, 439 residues long: UPF0229 protein Nham_0975 (439 aa).

Positions 39 to 106 are disordered; that stretch reads RSGRISDADG…AGTPDPSMKD (68 aa). Over residues 58-76 the composition is skewed to basic and acidic residues; the sequence is STDEPRFEAAKDSGRREHV.

Belongs to the UPF0229 family.

This chain is UPF0229 protein Nham_0975, found in Nitrobacter hamburgensis (strain DSM 10229 / NCIMB 13809 / X14).